Reading from the N-terminus, the 172-residue chain is ATP synthase subunit b (172 aa).

A helical transmembrane segment spans residues 12 to 32 (SLYIGDLVFYIVTFIILMLLV). Composition is skewed to basic and acidic residues over residues 63 to 74 (ESAEKMAAKRQA) and 116 to 131 (AQKD…LNSA). Residues 63–131 (ESAEKMAAKR…QARRDALNSA (69 aa)) form a disordered region.

Belongs to the ATPase B chain family. As to quaternary structure, F-type ATPases have 2 components, F(1) - the catalytic core - and F(0) - the membrane proton channel. F(1) has five subunits: alpha(3), beta(3), gamma(1), delta(1), epsilon(1). F(0) has three main subunits: a(1), b(2) and c(10-14). The alpha and beta chains form an alternating ring which encloses part of the gamma chain. F(1) is attached to F(0) by a central stalk formed by the gamma and epsilon chains, while a peripheral stalk is formed by the delta and b chains.

The protein localises to the cell membrane. F(1)F(0) ATP synthase produces ATP from ADP in the presence of a proton or sodium gradient. F-type ATPases consist of two structural domains, F(1) containing the extramembraneous catalytic core and F(0) containing the membrane proton channel, linked together by a central stalk and a peripheral stalk. During catalysis, ATP synthesis in the catalytic domain of F(1) is coupled via a rotary mechanism of the central stalk subunits to proton translocation. In terms of biological role, component of the F(0) channel, it forms part of the peripheral stalk, linking F(1) to F(0). The polypeptide is ATP synthase subunit b (Limosilactobacillus reuteri (strain DSM 20016) (Lactobacillus reuteri)).